Reading from the N-terminus, the 157-residue chain is Isotocin-neurophysin IT 1 (157 aa).

The signal sequence occupies residues 1–20; the sequence is MFGTSVSALCLLFLLSVCTA. C21 and C26 are oxidised to a cystine. At G29 the chain carries Glycine amide. Disulfide bonds link C42–C86, C45–C59, C53–C76, C60–C66, C93–C106, C100–C118, and C107–C112.

This sequence belongs to the vasopressin/oxytocin family. Seven disulfide bonds are present in neurophysin.

It localises to the secreted. In terms of biological role, isotocin causes contraction of smooth muscles. This Oncorhynchus masou (Cherry salmon) protein is Isotocin-neurophysin IT 1.